Here is a 161-residue protein sequence, read N- to C-terminus: Ribosome maturation factor RimP (161 aa).

It belongs to the RimP family.

It is found in the cytoplasm. Its function is as follows. Required for maturation of 30S ribosomal subunits. This chain is Ribosome maturation factor RimP, found in Rickettsia massiliae (strain Mtu5).